A 1210-amino-acid polypeptide reads, in one-letter code: Epidermal growth factor receptor (1210 aa).

The signal sequence occupies residues 1–24 (MRPSGTAGAALLALLAALCPASRA). The Extracellular segment spans residues 25–645 (LEEKKVCQGT…CPTNGPKIPS (621 aa)). The cysteines at positions 31 and 58 are disulfide-linked. Asn-56 carries N-linked (GlcNAc...) (complex) asparagine; atypical; partial glycosylation. A glycan (N-linked (GlcNAc...) asparagine; atypical) is linked at Asn-73. One copy of the Approximate repeat lies at 75–300 (DLSFLKTIQE…CVKKCPRNYV (226 aa)). Residues Asn-128, Asn-175, and Asn-196 are each glycosylated (N-linked (GlcNAc...) asparagine). 13 disulfides stabilise this stretch: Cys-157–Cys-187, Cys-190–Cys-199, Cys-194–Cys-207, Cys-215–Cys-223, Cys-219–Cys-231, Cys-232–Cys-240, Cys-236–Cys-248, Cys-251–Cys-260, Cys-264–Cys-291, Cys-295–Cys-307, Cys-311–Cys-326, Cys-329–Cys-333, and Cys-337–Cys-362. Ser-229 is subject to Phosphoserine. N-linked (GlcNAc...) asparagine glycans are attached at residues Asn-352, Asn-361, Asn-413, and Asn-444. One copy of the Approximate repeat lies at 390-600 (QELDILKTVK…CVKTCPAGVM (211 aa)). 11 disulfides stabilise this stretch: Cys-470–Cys-499, Cys-506–Cys-515, Cys-510–Cys-523, Cys-526–Cys-535, Cys-539–Cys-555, Cys-558–Cys-571, Cys-562–Cys-579, Cys-582–Cys-591, Cys-595–Cys-617, Cys-620–Cys-628, and Cys-624–Cys-636. Asn-528 carries an N-linked (GlcNAc...) asparagine glycan. Residue Asn-568 is glycosylated (N-linked (GlcNAc...) asparagine; partial). Asn-603 is a glycosylation site (N-linked (GlcNAc...) asparagine; partial). An N-linked (GlcNAc...) (high mannose) asparagine glycan is attached at Asn-623. Residues 646–668 (IATGMVGALLLLLVVALGIGLFM) form a helical membrane-spanning segment. Topologically, residues 669–1210 (RRRHIVRKRT…APQSSEFIGA (542 aa)) are cytoplasmic. At Thr-678 the chain carries Phosphothreonine; by PKC and PKD/PRKD1. Residues 688-704 (LVEPLTPSGEAPNQALL) form an important for dimerization, phosphorylation and activation region. Thr-693 carries the post-translational modification Phosphothreonine; by PKD/PRKD1. A Phosphoserine modification is found at Ser-695. The Protein kinase domain occupies 712-979 (FKKIKVLGSG…KMARDPQRYL (268 aa)). Lys-716 is covalently cross-linked (Glycyl lysine isopeptide (Lys-Gly) (interchain with G-Cter in ubiquitin)). 718–726 (LGSGAFGTV) contacts ATP. Lys-737 participates in a covalent cross-link: Glycyl lysine isopeptide (Lys-Gly) (interchain with G-Cter in ubiquitin). Lys-745 contributes to the ATP binding site. Residue Lys-745 is modified to N6-(2-hydroxyisobutyryl)lysine. Residues Lys-754 and Lys-757 each participate in a glycyl lysine isopeptide (Lys-Gly) (interchain with G-Cter in ubiquitin) cross-link. An ATP-binding site is contributed by 790 to 791 (TQ). Residue Asp-837 is the Proton acceptor of the active site. Asp-855 serves as a coordination point for ATP. Residue Lys-867 forms a Glycyl lysine isopeptide (Lys-Gly) (interchain with G-Cter in ubiquitin) linkage. Position 869 is a phosphotyrosine (Tyr-869). Glycyl lysine isopeptide (Lys-Gly) (interchain with G-Cter in ubiquitin) cross-links involve residues Lys-929, Lys-960, and Lys-970. Residues Ser-991 and Ser-995 each carry the phosphoserine modification. A phosphotyrosine; by autocatalysis mark is found at Tyr-998 and Tyr-1016. Phosphoserine occurs at positions 1026 and 1039. Thr-1041 is modified (phosphothreonine). A Phosphoserine modification is found at Ser-1042. Cys-1049 carries the S-palmitoyl cysteine lipid modification. Residue Ser-1064 is modified to Phosphoserine. Tyr-1069 carries the phosphotyrosine modification. Phosphoserine occurs at positions 1070, 1071, and 1081. 2 positions are modified to phosphotyrosine; by autocatalysis: Tyr-1092 and Tyr-1110. The disordered stretch occupies residues 1097-1137 (VPKRPAGSVQNPVYHNQPLNPAPSRDPHYQDPHSTAVGNPE). Polar residues-rich tracts occupy residues 1104-1115 (SVQNPVYHNQPL) and 1128-1137 (PHSTAVGNPE). Residue Cys-1146 is the site of S-palmitoyl cysteine attachment. Ser-1166 carries the post-translational modification Phosphoserine. Tyr-1172 and Tyr-1197 each carry phosphotyrosine; by autocatalysis. Arg-1199 carries the omega-N-methylarginine modification.

It belongs to the protein kinase superfamily. Tyr protein kinase family. EGF receptor subfamily. As to quaternary structure, binding of the ligand triggers homo- and/or heterodimerization of the receptor triggering its autophosphorylation. Heterodimer with ERBB2. Forms a complex with CCDC88A/GIV (via SH2-like regions) and GNAI3 which leads to enhanced EGFR signaling and triggering of cell migration; binding to CCDC88A requires autophosphorylation of the EGFR C-terminal region, and ligand stimulation is required for recruitment of GNAI3 to the complex. Interacts with ERRFI1; inhibits dimerization of the kinase domain and autophosphorylation. Part of a complex with ERBB2 and either PIK3C2A or PIK3C2B. Interacts with GRB2; an adapter protein coupling the receptor to downstream signaling pathways. Interacts with GAB2; involved in signaling downstream of EGFR. Interacts with STAT3; mediates EGFR downstream signaling in cell proliferation. Interacts with RIPK1; involved in NF-kappa-B activation. Interacts (autophosphorylated) with CBL, CBLB and CBLC; involved in EGFR ubiquitination and regulation; interaction with CBL is reduced in the presence of tensin TNS4. Interacts with SOCS5; regulates EGFR degradation through ELOC- and ELOB-mediated ubiquitination and proteasomal degradation. Interacts with PRMT5; methylates EGFR and enhances interaction with PTPN6. Interacts (phosphorylated) with PTPN6; inhibits EGFR-dependent activation of MAPK/ERK. Interacts with COPG1; essential for regulation of EGF-dependent nuclear transport of EGFR by retrograde trafficking from the Golgi to the ER. Interacts with TNK2; this interaction is dependent on EGF stimulation and kinase activity of EGFR. Interacts with PCNA; positively regulates PCNA. Interacts with PELP1. Interacts with MUC1. Interacts with AP2M1. Interacts with FER. May interact with EPS8; mediates EPS8 phosphorylation. Interacts (via SH2 domains) with GRB2, NCK1 and NCK2. Interacts with ATXN2. Interacts with GAREM1. Interacts (ubiquitinated) with ANKRD13A/B/D; the interaction is direct and may regulate EGFR internalization after EGF stimulation. Interacts with GPER1; the interaction occurs in an estrogen-dependent manner. Interacts (via C-terminal cytoplasmic kinase domain) with ZPR1 (via zinc fingers). Interacts with RNF115 and RNF126. Interacts with GPRC5A (via its transmembrane domain). Interacts with FAM83B; positively regulates EGFR inducing its autophosphorylation in absence of stimulation by EGF. Interacts with LAPTM4B; positively correlates with EGFR activation. Interacts with STX19. Interacts with CD44. Interacts with PGRMC1; the interaction requires PGRMC1 homodimerization. Interacts with PIKFYVE. Interacts with NEU3. Interacts with TRAF4. Interacts with the ant venom OMEGA-myrmeciitoxin(02)-Mg1a. Interacts with CD82; this interaction facilitates ligand-induced endocytosis of the receptor and its subsequent desensitization. Post-translationally, phosphorylated on Tyr residues in response to EGF. Phosphorylation at Ser-695 is partial and occurs only if Thr-693 is phosphorylated. Phosphorylation at Thr-678 and Thr-693 by PRKD1 inhibits EGF-induced MAPK8/JNK1 activation. Dephosphorylation by PTPRJ prevents endocytosis and stabilizes the receptor at the plasma membrane. Autophosphorylation at Tyr-1197 is stimulated by methylation at Arg-1199 and enhances interaction with PTPN6. Autophosphorylation at Tyr-1092 and/or Tyr-1110 recruits STAT3. Dephosphorylated by PTPN1 and PTPN2. Monoubiquitinated and polyubiquitinated upon EGF stimulation; which does not affect tyrosine kinase activity or signaling capacity but may play a role in lysosomal targeting. Polyubiquitin linkage is mainly through 'Lys-63', but linkage through 'Lys-48', 'Lys-11' and 'Lys-29' also occurs. Deubiquitination by OTUD7B prevents degradation. Ubiquitinated by RNF115 and RNF126. Ubiquitinated by ZNRF1 or CBL at different lysines in response to EGF stimulation; leading to recruitment of the ESCRT machinery and subsequent degradation in the lysosomes. Deubiquitinated by UCHL1 leading to the inhibition of its degradation. In terms of processing, palmitoylated on Cys residues by ZDHHC20. Palmitoylation inhibits internalization after ligand binding, and increases the persistence of tyrosine-phosphorylated EGFR at the cell membrane. Palmitoylation increases the amplitude and duration of EGFR signaling. Post-translationally, methylated. Methylation at Arg-1199 by PRMT5 stimulates phosphorylation at Tyr-1197. Ubiquitously expressed. Isoform 2 is also expressed in ovarian cancers.

The protein localises to the cell membrane. It localises to the endoplasmic reticulum membrane. Its subcellular location is the golgi apparatus membrane. The protein resides in the nucleus membrane. It is found in the endosome. The protein localises to the endosome membrane. It localises to the nucleus. Its subcellular location is the secreted. The enzyme catalyses L-tyrosyl-[protein] + ATP = O-phospho-L-tyrosyl-[protein] + ADP + H(+). With respect to regulation, endocytosis and inhibition of the activated EGFR by phosphatases like PTPRJ and PTPRK constitute immediate regulatory mechanisms. Upon EGF-binding phosphorylates EPS15 that regulates EGFR endocytosis and activity. Moreover, inducible feedback inhibitors including LRIG1, SOCS4, SOCS5 and ERRFI1 constitute alternative regulatory mechanisms for the EGFR signaling. Up-regulated by NEU3-mediated desialylation of N-linked glycan at Asn-528. In terms of biological role, receptor tyrosine kinase binding ligands of the EGF family and activating several signaling cascades to convert extracellular cues into appropriate cellular responses. Known ligands include EGF, TGFA/TGF-alpha, AREG, epigen/EPGN, BTC/betacellulin, epiregulin/EREG and HBEGF/heparin-binding EGF. Ligand binding triggers receptor homo- and/or heterodimerization and autophosphorylation on key cytoplasmic residues. The phosphorylated receptor recruits adapter proteins like GRB2 which in turn activates complex downstream signaling cascades. Activates at least 4 major downstream signaling cascades including the RAS-RAF-MEK-ERK, PI3 kinase-AKT, PLCgamma-PKC and STATs modules. May also activate the NF-kappa-B signaling cascade. Also directly phosphorylates other proteins like RGS16, activating its GTPase activity and probably coupling the EGF receptor signaling to the G protein-coupled receptor signaling. Also phosphorylates MUC1 and increases its interaction with SRC and CTNNB1/beta-catenin. Positively regulates cell migration via interaction with CCDC88A/GIV which retains EGFR at the cell membrane following ligand stimulation, promoting EGFR signaling which triggers cell migration. Plays a role in enhancing learning and memory performance. Plays a role in mammalian pain signaling (long-lasting hypersensitivity). Functionally, isoform 2 may act as an antagonist of EGF action. (Microbial infection) Acts as a receptor for hepatitis C virus (HCV) in hepatocytes and facilitates its cell entry. Mediates HCV entry by promoting the formation of the CD81-CLDN1 receptor complexes that are essential for HCV entry and by enhancing membrane fusion of cells expressing HCV envelope glycoproteins. The protein is Epidermal growth factor receptor of Homo sapiens (Human).